A 607-amino-acid polypeptide reads, in one-letter code: Bifunctional lysine-specific demethylase and histidyl-hydroxylase NO66 (607 aa).

Disordered stretches follow at residues 23-121 (GPTI…IKTN) and 139-184 (ATQH…GEVE). Residues 25–37 (TIQQTGATKTPKT) are compositionally biased toward polar residues. The segment covering 39-58 (SKIRRLSIRKSTRKIKHALK) has biased composition (basic residues). The segment covering 156 to 167 (DKTPVKRVRSDT) has biased composition (basic and acidic residues). The region spanning 188–405 (EEAEKMFEWL…DLMEKLVPAA (218 aa)) is the JmjC domain. His328, Asp330, and His371 together coordinate Fe cation.

This sequence belongs to the ROX family. NO66 subfamily. The cofactor is Fe(2+).

It is found in the nucleus. The enzyme catalyses L-histidyl-[protein] + 2-oxoglutarate + O2 = (3S)-3-hydroxy-L-histidyl-[protein] + succinate + CO2. The catalysed reaction is N(6),N(6)-dimethyl-L-lysyl(36)-[histone H3] + 2 2-oxoglutarate + 2 O2 = L-lysyl(36)-[histone H3] + 2 formaldehyde + 2 succinate + 2 CO2. In terms of biological role, oxygenase that can act as both a histone lysine demethylase and a ribosomal histidine hydroxylase. Specifically demethylates 'Lys-4' (H3K4me) and 'Lys-36' (H3K36me) of histone H3, thereby playing a central role in histone code. Also catalyzes the hydroxylation of 60S ribosomal protein L8. In Branchiostoma floridae (Florida lancelet), this protein is Bifunctional lysine-specific demethylase and histidyl-hydroxylase NO66.